Reading from the N-terminus, the 563-residue chain is Arginine--tRNA ligase (563 aa).

A 'HIGH' region motif is present at residues 137 to 147; the sequence is ANPTGLLHMGN.

Belongs to the class-I aminoacyl-tRNA synthetase family. Monomer.

The protein localises to the cytoplasm. The enzyme catalyses tRNA(Arg) + L-arginine + ATP = L-arginyl-tRNA(Arg) + AMP + diphosphate. The polypeptide is Arginine--tRNA ligase (Desulforudis audaxviator (strain MP104C)).